Here is a 1318-residue protein sequence, read N- to C-terminus: DNA-directed RNA polymerase subunit beta' (1318 aa).

The Zn(2+) site is built by cysteine 60, cysteine 62, cysteine 75, and cysteine 78. Aspartate 535, aspartate 537, and aspartate 539 together coordinate Mg(2+). Residues cysteine 890, cysteine 967, cysteine 974, and cysteine 977 each coordinate Zn(2+).

It belongs to the RNA polymerase beta' chain family. As to quaternary structure, the RNAP catalytic core consists of 2 alpha, 1 beta, 1 beta' and 1 omega subunit. When a sigma factor is associated with the core the holoenzyme is formed, which can initiate transcription. Requires Mg(2+) as cofactor. Zn(2+) is required as a cofactor.

It carries out the reaction RNA(n) + a ribonucleoside 5'-triphosphate = RNA(n+1) + diphosphate. DNA-dependent RNA polymerase catalyzes the transcription of DNA into RNA using the four ribonucleoside triphosphates as substrates. The protein is DNA-directed RNA polymerase subunit beta' of Rhodococcus jostii (strain RHA1).